Reading from the N-terminus, the 210-residue chain is Syntaxin-binding protein 6 (210 aa).

S2 bears the N-acetylserine mark. One can recognise a v-SNARE coiled-coil homology domain in the interval 151–210 (GNSILHSAADSVTSAVQKASQALNERGERLGRAEEKTEDLKNSAQQFAETAHKLAMKHKC).

Part of a ternary complex containing SNAP25 and STX1A that can be dissociated by NAPA and NSF. Interacts with STX4A. As to expression, detected at low levels in brain, and at very low levels in heart, adrenal gland, testis, liver and kidney.

The protein resides in the cytoplasm. It is found in the membrane. Forms non-fusogenic complexes with SNAP25 and STX1A and may thereby modulate the formation of functional SNARE complexes and exocytosis. The chain is Syntaxin-binding protein 6 (STXBP6) from Homo sapiens (Human).